The following is a 304-amino-acid chain: Dermonecrotic toxin LiSicTox-betaIA1i (304 aa).

Positions 1-21 are cleaved as a signal peptide; the sequence is MLLPAVISFIVYAVFLQEANG. Residues 22 to 26 constitute a propeptide that is removed on maturation; it reads HAAER. Residue H38 is part of the active site. Mg(2+) is bound by residues E58 and D60. H74 functions as the Nucleophile in the catalytic mechanism. Intrachain disulfides connect C78–C84 and C80–C223. Residue D118 coordinates Mg(2+).

This sequence belongs to the arthropod phospholipase D family. Class II subfamily. Class IIb sub-subfamily. Mg(2+) is required as a cofactor. As to expression, expressed by the venom gland.

The protein resides in the secreted. The enzyme catalyses an N-(acyl)-sphingosylphosphocholine = an N-(acyl)-sphingosyl-1,3-cyclic phosphate + choline. It carries out the reaction an N-(acyl)-sphingosylphosphoethanolamine = an N-(acyl)-sphingosyl-1,3-cyclic phosphate + ethanolamine. It catalyses the reaction a 1-acyl-sn-glycero-3-phosphocholine = a 1-acyl-sn-glycero-2,3-cyclic phosphate + choline. The catalysed reaction is a 1-acyl-sn-glycero-3-phosphoethanolamine = a 1-acyl-sn-glycero-2,3-cyclic phosphate + ethanolamine. In terms of biological role, dermonecrotic toxins cleave the phosphodiester linkage between the phosphate and headgroup of certain phospholipids (sphingolipid and lysolipid substrates), forming an alcohol (often choline) and a cyclic phosphate. This toxin acts on sphingomyelin (SM) with low activity. It may also act on ceramide phosphoethanolamine (CPE), lysophosphatidylcholine (LPC) and lysophosphatidylethanolamine (LPE), but not on lysophosphatidylserine (LPS), and lysophosphatidylglycerol (LPG). It acts by transphosphatidylation, releasing exclusively cyclic phosphate products as second products. Induces inflammatory response but no or very weak hemolysis, dermonecrosis, vascular permeability, edema, and cytotoxicity against renal epithelial cells. Causes swelling and erythema. In vivo, is not lethal to mice when intraperitoneally injected. In Loxosceles intermedia (Brown spider), this protein is Dermonecrotic toxin LiSicTox-betaIA1i.